The chain runs to 291 residues: MEMO1 family protein TON_0132 (291 aa).

This sequence belongs to the MEMO1 family.

The sequence is that of MEMO1 family protein TON_0132 from Thermococcus onnurineus (strain NA1).